The primary structure comprises 381 residues: PqqA peptide cyclase (381 aa).

Residues Val-12 to Glu-228 form the Radical SAM core domain. 3 residues coordinate [4Fe-4S] cluster: Cys-26, Cys-30, and Cys-33.

It belongs to the radical SAM superfamily. PqqE family. In terms of assembly, interacts with PqqD. The interaction is necessary for activity of PqqE. It depends on [4Fe-4S] cluster as a cofactor.

It catalyses the reaction [PQQ precursor protein] + S-adenosyl-L-methionine = E-Y cross-linked-[PQQ precursor protein] + 5'-deoxyadenosine + L-methionine + H(+). It functions in the pathway cofactor biosynthesis; pyrroloquinoline quinone biosynthesis. Catalyzes the cross-linking of a glutamate residue and a tyrosine residue in the PqqA protein as part of the biosynthesis of pyrroloquinoline quinone (PQQ). This Pseudomonas aeruginosa (strain LESB58) protein is PqqA peptide cyclase.